Consider the following 433-residue polypeptide: Tol-Pal system protein TolB (433 aa).

A signal peptide spans 1-21; sequence MRNLLRGMLVVICCMAGIAAA.

The protein belongs to the TolB family. The Tol-Pal system is composed of five core proteins: the inner membrane proteins TolA, TolQ and TolR, the periplasmic protein TolB and the outer membrane protein Pal. They form a network linking the inner and outer membranes and the peptidoglycan layer.

Its subcellular location is the periplasm. Part of the Tol-Pal system, which plays a role in outer membrane invagination during cell division and is important for maintaining outer membrane integrity. This Pseudomonas fluorescens (strain SBW25) protein is Tol-Pal system protein TolB.